Consider the following 474-residue polypeptide: Transcription factor SOX-4 (474 aa).

Residues 1–10 show a composition bias toward polar residues; the sequence is MVQQTNNAEN. Residues 1–58 form a disordered region; that stretch reads MVQQTNNAENTEALLAGESSDSGAGLELGIASSPTPGSTASTGGKADDPSWCKTPSGH. Over residues 31–44 the composition is skewed to low complexity; it reads ASSPTPGSTASTGG. A DNA-binding region (HMG box) is located at residues 59-127; the sequence is IKRPMNAFMV…KHMADYPDYK (69 aa). Residue Lys95 is modified to N6-acetyllysine. Disordered stretches follow at residues 128–228, 262–286, and 302–416; these read YRPR…GGGK, ARTP…APGK, and LGTS…NFES. The span at 138–149 shows a compositional bias: low complexity; the sequence is NANSSSSAAASS. Residues 158-189 show a composition bias toward gly residues; sequence VGGSGGGGHGGGGGGGSSNAGGGGGGASGGGA. Composition is skewed to low complexity over residues 266–283, 304–320, 336–354, and 366–396; these read SASA…ALAA, TSSS…DPSD, APSL…AGRS, and AASP…GSSS. Residues 397-406 are compositionally biased toward acidic residues; that stretch reads SDDEFEDDLL. Over residues 407–416 the composition is skewed to low complexity; that stretch reads DLNPSSNFES. Residues 426-434 carry the 9aaTAD motif; it reads SALDRDLDF.

Interacts with UBE2I. Interacts with HDAC1; interaction inhibits the transcriptional activator activity. In terms of processing, acetylation at Lys-95 by KAT5 promotes the transcription activator activity and is required during myoblast differentiation. Acetylation by KAT5 abolishes the interaction between SOX4 and HDAC1 and switches SOX4 into a transcriptional activator. As to expression, testis, brain, and heart.

It localises to the nucleus. Functionally, transcriptional activator that binds with high affinity to the T-cell enhancer motif 5'-AACAAAG-3' motif. Required for IL17A-producing Vgamma2-positive gamma-delta T-cell maturation and development, via binding to regulator loci of RORC to modulate expression. Involved in skeletal myoblast differentiation by promoting gene expression of CALD1. This Homo sapiens (Human) protein is Transcription factor SOX-4.